A 146-amino-acid polypeptide reads, in one-letter code: MRNEMHLQFSARSENESFARVTVAAFVAQLDPTMDELTEIKTVVSEAVTNAIIHGYNNDPNGIVSISVIIEDGVVHLTVRDEGVGIPDIEEARQPLFTTKPELERSGMGFTIMENFMDEVIVESEVNKGTTVYLKKHIAKSKALCN.

The protein belongs to the anti-sigma-factor family.

The enzyme catalyses L-seryl-[protein] + ATP = O-phospho-L-seryl-[protein] + ADP + H(+). It catalyses the reaction L-threonyl-[protein] + ATP = O-phospho-L-threonyl-[protein] + ADP + H(+). Its function is as follows. Binds to sigma F and blocks its ability to form an RNA polymerase holoenzyme (E-sigma F). Phosphorylates SpoIIAA on a serine residue. This phosphorylation may enable SpoIIAA to act as an anti-anti-sigma factor that counteracts SpoIIAB and thus releases sigma F from inhibition. The polypeptide is Anti-sigma F factor (Geobacillus kaustophilus (strain HTA426)).